Here is a 297-residue protein sequence, read N- to C-terminus: Craniofacial development protein 1 (297 aa).

Acidic residues-rich tracts occupy residues Met-1 to Tyr-18, Tyr-25 to Glu-43, and Leu-70 to Glu-79. 2 disordered regions span residues Met-1–Glu-157 and Phe-190–Met-222. Phosphoserine occurs at positions 81, 84, and 85. The segment covering Lys-97–Glu-111 has biased composition (basic and acidic residues). Position 115 is a phosphoserine (Ser-115). 2 stretches are compositionally biased toward basic and acidic residues: residues Val-147 to Glu-157 and Phe-190 to Pro-199. Residue Lys-148 forms a Glycyl lysine isopeptide (Lys-Gly) (interchain with G-Cter in SUMO2) linkage. Positions Val-176 to Gly-215 are hydrophilic. Phosphoserine is present on Ser-214. Residues Leu-216 to Pro-297 form the BCNT-C domain. The residue at position 217 (Lys-217) is an N6-methyllysine. Ser-248 is modified (phosphoserine).

Brain.

Functionally, may play a role during embryogenesis. This chain is Craniofacial development protein 1 (CFDP1), found in Bos taurus (Bovine).